The chain runs to 116 residues: U16-barytoxin-Tl1c (116 aa).

The first 20 residues, 1 to 20 (MKTIIVFLSLLVLATKFGDA), serve as a signal peptide directing secretion. The propeptide occupies 21-74 (NEGVNQEQMKEVIQNEFREDFLNEMAAMSLLQQLEAIESTLLEKEADRNSRQKR). 3 disulfides stabilise this stretch: cysteine 75/cysteine 90, cysteine 82/cysteine 95, and cysteine 89/cysteine 110.

The protein belongs to the neurotoxin 14 (magi-1) family. 06 (ICK-Trit) subfamily. In terms of tissue distribution, expressed by the venom gland.

Its subcellular location is the secreted. Functionally, ion channel inhibitor. This chain is U16-barytoxin-Tl1c, found in Trittame loki (Brush-footed trapdoor spider).